A 184-amino-acid polypeptide reads, in one-letter code: Casparian strip membrane protein 3 (184 aa).

Over 1 to 22 (MEGSGEHGETSKGPLSKGVSRG) the chain is Cytoplasmic. The chain crosses the membrane as a helical span at residues 23-43 (LCILDLIFRVIAVIGTLASAI). Residues 44-72 (AMGTTNQTMPFFTQFVQFKERYSDLPTLT) lie on the Extracellular side of the membrane. N49 is a glycosylation site (N-linked (GlcNAc...) asparagine). A helical transmembrane segment spans residues 73–93 (FFVVANSIASAYLIISLPLSI). At 94–105 (VHIIRSRAKYSR) the chain is on the cytoplasmic side. Residues 106-126 (LILIFFDVAMLALVTAAASAG) traverse the membrane as a helical segment. The Extracellular segment spans residues 127-159 (AAIVYLAHNGNVSANWFAICQQFDSFCERISGS). The N-linked (GlcNAc...) asparagine glycan is linked to N137. A helical membrane pass occupies residues 160 to 180 (LIGSFAAMVVLILLILLSAVA). The Cytoplasmic segment spans residues 181–184 (LARR).

The protein belongs to the Casparian strip membrane proteins (CASP) family. As to quaternary structure, homodimer and heterodimers.

It is found in the cell membrane. Its function is as follows. Regulates membrane-cell wall junctions and localized cell wall deposition. Required for establishment of the Casparian strip membrane domain (CSD) and the subsequent formation of Casparian strips, a cell wall modification of the root endodermis that determines an apoplastic barrier between the intraorganismal apoplasm and the extraorganismal apoplasm and prevents lateral diffusion. This Brachypodium distachyon (Purple false brome) protein is Casparian strip membrane protein 3.